Reading from the N-terminus, the 466-residue chain is Acetyl-coenzyme A carboxylase carboxyl transferase subunit beta, chloroplastic (466 aa).

Positions 198–466 (LWIQCENCYE…FPLNQNSIGQ (269 aa)) constitute a CoA carboxyltransferase N-terminal domain. Positions 202, 205, 221, and 224 each coordinate Zn(2+). The C4-type zinc finger occupies 202 to 224 (CENCYELNYKKLLKSKMRICDEC).

This sequence belongs to the AccD/PCCB family. As to quaternary structure, acetyl-CoA carboxylase is a heterohexamer composed of biotin carboxyl carrier protein, biotin carboxylase and 2 subunits each of ACCase subunit alpha and ACCase plastid-coded subunit beta (accD). It depends on Zn(2+) as a cofactor.

The protein resides in the plastid. It is found in the chloroplast stroma. It carries out the reaction N(6)-carboxybiotinyl-L-lysyl-[protein] + acetyl-CoA = N(6)-biotinyl-L-lysyl-[protein] + malonyl-CoA. It participates in lipid metabolism; malonyl-CoA biosynthesis; malonyl-CoA from acetyl-CoA: step 1/1. Functionally, component of the acetyl coenzyme A carboxylase (ACC) complex. Biotin carboxylase (BC) catalyzes the carboxylation of biotin on its carrier protein (BCCP) and then the CO(2) group is transferred by the transcarboxylase to acetyl-CoA to form malonyl-CoA. In Fagopyrum esculentum subsp. ancestrale (Wild buckwheat), this protein is Acetyl-coenzyme A carboxylase carboxyl transferase subunit beta, chloroplastic.